The following is a 358-amino-acid chain: Biotin synthase (358 aa).

In terms of domain architecture, Radical SAM core spans 50 to 277 (NEVQVSTLCS…KSHVRLSAGR (228 aa)). Residues Cys65, Cys69, and Cys72 each contribute to the [4Fe-4S] cluster site. [2Fe-2S] cluster is bound by residues Cys109, Cys140, Cys200, and Arg272.

This sequence belongs to the radical SAM superfamily. Biotin synthase family. In terms of assembly, homodimer. Requires [4Fe-4S] cluster as cofactor. The cofactor is [2Fe-2S] cluster.

The enzyme catalyses (4R,5S)-dethiobiotin + (sulfur carrier)-SH + 2 reduced [2Fe-2S]-[ferredoxin] + 2 S-adenosyl-L-methionine = (sulfur carrier)-H + biotin + 2 5'-deoxyadenosine + 2 L-methionine + 2 oxidized [2Fe-2S]-[ferredoxin]. The protein operates within cofactor biosynthesis; biotin biosynthesis; biotin from 7,8-diaminononanoate: step 2/2. Functionally, catalyzes the conversion of dethiobiotin (DTB) to biotin by the insertion of a sulfur atom into dethiobiotin via a radical-based mechanism. The polypeptide is Biotin synthase (Cellvibrio japonicus (strain Ueda107) (Pseudomonas fluorescens subsp. cellulosa)).